The sequence spans 245 residues: Biosynthetic peptidoglycan transglycosylase (245 aa).

The helical transmembrane segment at 20–42 (VYAGSVFAGAWLATQLFYLVQIA) threads the bilayer.

Belongs to the glycosyltransferase 51 family.

It localises to the cell inner membrane. It catalyses the reaction [GlcNAc-(1-&gt;4)-Mur2Ac(oyl-L-Ala-gamma-D-Glu-L-Lys-D-Ala-D-Ala)](n)-di-trans,octa-cis-undecaprenyl diphosphate + beta-D-GlcNAc-(1-&gt;4)-Mur2Ac(oyl-L-Ala-gamma-D-Glu-L-Lys-D-Ala-D-Ala)-di-trans,octa-cis-undecaprenyl diphosphate = [GlcNAc-(1-&gt;4)-Mur2Ac(oyl-L-Ala-gamma-D-Glu-L-Lys-D-Ala-D-Ala)](n+1)-di-trans,octa-cis-undecaprenyl diphosphate + di-trans,octa-cis-undecaprenyl diphosphate + H(+). Its pathway is cell wall biogenesis; peptidoglycan biosynthesis. In terms of biological role, peptidoglycan polymerase that catalyzes glycan chain elongation from lipid-linked precursors. The sequence is that of Biosynthetic peptidoglycan transglycosylase from Burkholderia ambifaria (strain MC40-6).